A 1141-amino-acid chain; its full sequence is DNA-directed RNA polymerase subunit beta (1141 aa).

Composition is skewed to acidic residues over residues 1063-1074 (EIEIKEDDDDVS) and 1096-1141 (GGNE…GDEE). Residues 1063–1141 (EIEIKEDDDD…VPDEAYGDEE (79 aa)) are disordered.

Belongs to the RNA polymerase beta chain family. As to quaternary structure, the RNAP catalytic core consists of 2 alpha, 1 beta, 1 beta' and 1 omega subunit. When a sigma factor is associated with the core the holoenzyme is formed, which can initiate transcription.

It carries out the reaction RNA(n) + a ribonucleoside 5'-triphosphate = RNA(n+1) + diphosphate. DNA-dependent RNA polymerase catalyzes the transcription of DNA into RNA using the four ribonucleoside triphosphates as substrates. The sequence is that of DNA-directed RNA polymerase subunit beta from Moorella thermoacetica (strain ATCC 39073 / JCM 9320).